Consider the following 562-residue polypeptide: uncharacterized protein (562 aa).

5 helical membrane-spanning segments follow: residues 15–34 (WGGG…AFGI), 41–63 (VAGI…HFNL), 78–97 (LILF…FSAF), 104–126 (LNML…HFIT), and 165–187 (IALG…LLGL). RCK C-terminal domains are found at residues 204 to 286 (QGLG…ITAF) and 289 to 374 (KPIE…VLGN). 6 helical membrane passes run 384–403 (LIPI…IPFM), 413–430 (LGLA…SRFG), 450–472 (IGIS…ETII), 476–498 (GYVW…GFIG), 505–524 (NYYT…PALA), and 539–561 (YATV…ILSL).

Belongs to the AAE transporter (TC 2.A.81) family.

The protein localises to the cell membrane. This is an uncharacterized protein from Bacteroides fragilis (strain YCH46).